Reading from the N-terminus, the 173-residue chain is Glycine cleavage system H protein, mitochondrial (173 aa).

Residues 1-48 constitute a mitochondrion transit peptide; that stretch reads MALRVVRSVRALLCTLRAVPSPAAPCPPRPWQLGVGAVRTLRTGPALL. A Lipoyl-binding domain is found at 66–148; sequence IGTVGISNFA…YEDGWLIKMT (83 aa). An N6-lipoyllysine modification is found at lysine 107.

This sequence belongs to the GcvH family. As to quaternary structure, interacts with GLDC. The glycine cleavage system is composed of four proteins: P (GLDC), T (GCST), L (DLD) and H (GCSH). (R)-lipoate is required as a cofactor.

It localises to the mitochondrion. The glycine cleavage system catalyzes the degradation of glycine. The H protein (GCSH) shuttles the methylamine group of glycine from the P protein (GLDC) to the T protein (GCST). Has a pivotal role in the lipoylation of enzymes involved in cellular energetics such as the mitochondrial dihydrolipoyllysine-residue acetyltransferase component of pyruvate dehydrogenase complex (DLAT), and the mitochondrial dihydrolipoyllysine-residue succinyltransferase component of 2-oxoglutarate dehydrogenase complex (DLST). The polypeptide is Glycine cleavage system H protein, mitochondrial (Homo sapiens (Human)).